Consider the following 397-residue polypeptide: Exodeoxyribonuclease 7 large subunit (397 aa).

Belongs to the XseA family. As to quaternary structure, heterooligomer composed of large and small subunits.

The protein resides in the cytoplasm. The catalysed reaction is Exonucleolytic cleavage in either 5'- to 3'- or 3'- to 5'-direction to yield nucleoside 5'-phosphates.. Bidirectionally degrades single-stranded DNA into large acid-insoluble oligonucleotides, which are then degraded further into small acid-soluble oligonucleotides. The protein is Exodeoxyribonuclease 7 large subunit of Anaplasma marginale (strain St. Maries).